Consider the following 277-residue polypeptide: Protein RKD3 (277 aa).

The RWP-RK domain occupies 142-226; it reads KRIIMKRRYR…LGNTKGRTPK (85 aa). Residues 201 to 246 adopt a coiled-coil conformation; sequence RKLTSLNALIANLKDLLGNTKGRTPKSKLRNALELLEMEKKMIEEV.

Its subcellular location is the nucleus. Putative transcription factor. In Arabidopsis thaliana (Mouse-ear cress), this protein is Protein RKD3 (RKD3).